We begin with the raw amino-acid sequence, 712 residues long: Osmolarity two-component system protein SSK1 (712 aa).

A disordered region spans residues 73 to 114 (ADNTSSNNTNDNSCRSKSNGAGSGANLSVNSNTKSSVSPTAG). The span at 74 to 85 (DNTSSNNTNDNS) shows a compositional bias: low complexity. The span at 87-113 (RSKSNGAGSGANLSVNSNTKSSVSPTA) shows a compositional bias: polar residues. A phosphoserine mark is found at S110, S195, S327, S351, S368, and S380. Residues 340–362 (KADLKGKDGNSSPQEFKLITDEE) are disordered. Residues 448–468 (EVQRRKEDVTPASPILTSSQT) form a disordered region. The Response regulatory domain maps to 505 to 647 (NVLIVEDNVI…WLSKKITEWG (143 aa)). Residue D554 is modified to 4-aspartylphosphate. The segment at 672–712 (KSPQKPIAPSNPHSFKQATSMTPTHSPVRKNSNLSPTQIEL) is disordered. Residue S673 is modified to Phosphoserine. Residues 682-712 (NPHSFKQATSMTPTHSPVRKNSNLSPTQIEL) show a composition bias toward polar residues. T693 carries the phosphothreonine modification. 2 positions are modified to phosphoserine: S703 and S706.

It belongs to the SSK1 family. Interacts with SSK2, SSK22 and YPD1. The phosphorelay mechanism involves the sequential transfer of a phosphate group from 'His-576' (H1) to 'Asp-1144' (D1) of SLN1, then to 'His-64' (H2) of YPD1 and finally to Asp-554 (D2) of SSK1.

It localises to the cytoplasm. In terms of biological role, final receptor of the SLN1-YPD1-SSK1 two-component regulatory system, which controls activity of the HOG1 pathway in response to changes in the osmolarity of the extracellular environment. Under normal osmotic conditions, maintained in a phosphorylated and inactive state by the phosphorelay intermediate protein YPD1. Under conditions of high osmolarity, the histidine kinase SLN1 is no longer active and the unphosphorylated form of SSK1 interacts with and activates SSK2 and SSK22, two MAPKKKs that further stimulate the PBS2-HOG1 MAPKK-MAPK cascade. Unphosphorylated SSK1 is subsequently degraded by the UBC7-dependent ubiquitin-proteasome system to down-regulate the HOG1 pathway after completion of the osmotic adaptation. This chain is Osmolarity two-component system protein SSK1, found in Saccharomyces cerevisiae (strain ATCC 204508 / S288c) (Baker's yeast).